Here is a 165-residue protein sequence, read N- to C-terminus: Endoribonuclease YbeY (165 aa).

Residues His130, His134, and His140 each contribute to the Zn(2+) site.

This sequence belongs to the endoribonuclease YbeY family. It depends on Zn(2+) as a cofactor.

Its subcellular location is the cytoplasm. Functionally, single strand-specific metallo-endoribonuclease involved in late-stage 70S ribosome quality control and in maturation of the 3' terminus of the 16S rRNA. In Streptococcus gordonii (strain Challis / ATCC 35105 / BCRC 15272 / CH1 / DL1 / V288), this protein is Endoribonuclease YbeY.